The chain runs to 268 residues: Putative type I specificity subunit S.MpnORF365P (268 aa).

It belongs to the type-I restriction system S methylase family. The methyltransferase is composed of M and S polypeptides.

Functionally, the specificity (S) subunit of a type I methyltransferase (MTase); this subunit dictates DNA sequence specificity. The single R subunit has multiple frameshifts and is probably not expressed. The polypeptide is Putative type I specificity subunit S.MpnORF365P (Mycoplasma pneumoniae (strain ATCC 29342 / M129 / Subtype 1) (Mycoplasmoides pneumoniae)).